Consider the following 629-residue polypeptide: Protein EDS1B (629 aa).

Ser123 serves as the catalytic Nucleophile. Catalysis depends on charge relay system residues Asp187 and His317.

Interacts (via N-terminus) with PAD4 and SAG101. Part of a nuclear complex made of EDS1, PAD4 and SAG101, that can be redirected to the cytoplasm in the presence of an extranuclear form of EDS1. Does not interact with itself or with EDS1.

Its subcellular location is the nucleus. It localises to the cytoplasm. In terms of biological role, acts as a second functional copy of EDS1. Can mediate HRT-mediated resistance to turnip crinkle virus. The polypeptide is Protein EDS1B (EDS1B) (Arabidopsis thaliana (Mouse-ear cress)).